The following is a 159-amino-acid chain: 2-C-methyl-D-erythritol 2,4-cyclodiphosphate synthase (159 aa).

Residues Asp-10 and His-12 each coordinate a divalent metal cation. Residues 10-12 (DVH) and 36-37 (HS) contribute to the 4-CDP-2-C-methyl-D-erythritol 2-phosphate site. His-44 lines the a divalent metal cation pocket. Residues 58-60 (DIG), 63-67 (FSDTD), and Arg-144 contribute to the 4-CDP-2-C-methyl-D-erythritol 2-phosphate site.

The protein belongs to the IspF family. Homotrimer. The cofactor is a divalent metal cation.

It carries out the reaction 4-CDP-2-C-methyl-D-erythritol 2-phosphate = 2-C-methyl-D-erythritol 2,4-cyclic diphosphate + CMP. It functions in the pathway isoprenoid biosynthesis; isopentenyl diphosphate biosynthesis via DXP pathway; isopentenyl diphosphate from 1-deoxy-D-xylulose 5-phosphate: step 4/6. Its function is as follows. Involved in the biosynthesis of isopentenyl diphosphate (IPP) and dimethylallyl diphosphate (DMAPP), two major building blocks of isoprenoid compounds. Catalyzes the conversion of 4-diphosphocytidyl-2-C-methyl-D-erythritol 2-phosphate (CDP-ME2P) to 2-C-methyl-D-erythritol 2,4-cyclodiphosphate (ME-CPP) with a corresponding release of cytidine 5-monophosphate (CMP). This is 2-C-methyl-D-erythritol 2,4-cyclodiphosphate synthase from Paraburkholderia xenovorans (strain LB400).